We begin with the raw amino-acid sequence, 224 residues long: 7-cyano-7-deazaguanine synthase (224 aa).

Residue 9-19 (LSGGLDSATVL) participates in ATP binding. Zn(2+) is bound by residues Cys189, Cys199, Cys202, and Cys205.

The protein belongs to the QueC family. Zn(2+) serves as cofactor.

The catalysed reaction is 7-carboxy-7-deazaguanine + NH4(+) + ATP = 7-cyano-7-deazaguanine + ADP + phosphate + H2O + H(+). It functions in the pathway purine metabolism; 7-cyano-7-deazaguanine biosynthesis. Its function is as follows. Catalyzes the ATP-dependent conversion of 7-carboxy-7-deazaguanine (CDG) to 7-cyano-7-deazaguanine (preQ(0)). The chain is 7-cyano-7-deazaguanine synthase from Ralstonia nicotianae (strain ATCC BAA-1114 / GMI1000) (Ralstonia solanacearum).